The following is a 427-amino-acid chain: 3-phosphoshikimate 1-carboxyvinyltransferase (427 aa).

Residues K22, S23, and R27 each coordinate 3-phosphoshikimate. A phosphoenolpyruvate-binding site is contributed by K22. 2 residues coordinate phosphoenolpyruvate: G96 and R124. Residues S169, S170, Q171, S197, D313, N336, and K340 each coordinate 3-phosphoshikimate. Q171 contributes to the phosphoenolpyruvate binding site. D313 (proton acceptor) is an active-site residue. Positions 344, 386, and 411 each coordinate phosphoenolpyruvate.

It belongs to the EPSP synthase family. As to quaternary structure, monomer.

It is found in the cytoplasm. It catalyses the reaction 3-phosphoshikimate + phosphoenolpyruvate = 5-O-(1-carboxyvinyl)-3-phosphoshikimate + phosphate. Its pathway is metabolic intermediate biosynthesis; chorismate biosynthesis; chorismate from D-erythrose 4-phosphate and phosphoenolpyruvate: step 6/7. In terms of biological role, catalyzes the transfer of the enolpyruvyl moiety of phosphoenolpyruvate (PEP) to the 5-hydroxyl of shikimate-3-phosphate (S3P) to produce enolpyruvyl shikimate-3-phosphate and inorganic phosphate. The chain is 3-phosphoshikimate 1-carboxyvinyltransferase from Salmonella heidelberg (strain SL476).